The sequence spans 702 residues: Ribosomal RNA large subunit methyltransferase K/L (702 aa).

The 112-residue stretch at 43-154 folds into the THUMP domain; sequence LIYQSLMWSR…KETASIALDL (112 aa).

The protein belongs to the methyltransferase superfamily. RlmKL family.

It localises to the cytoplasm. It catalyses the reaction guanosine(2445) in 23S rRNA + S-adenosyl-L-methionine = N(2)-methylguanosine(2445) in 23S rRNA + S-adenosyl-L-homocysteine + H(+). The enzyme catalyses guanosine(2069) in 23S rRNA + S-adenosyl-L-methionine = N(2)-methylguanosine(2069) in 23S rRNA + S-adenosyl-L-homocysteine + H(+). Specifically methylates the guanine in position 2445 (m2G2445) and the guanine in position 2069 (m7G2069) of 23S rRNA. This chain is Ribosomal RNA large subunit methyltransferase K/L, found in Salmonella paratyphi B (strain ATCC BAA-1250 / SPB7).